A 92-amino-acid polypeptide reads, in one-letter code: DNA-directed RNA polymerase subunit Rpo11 (92 aa).

The protein belongs to the archaeal Rpo11/eukaryotic RPB11/RPC19 RNA polymerase subunit family. As to quaternary structure, part of the RNA polymerase complex.

It localises to the cytoplasm. The enzyme catalyses RNA(n) + a ribonucleoside 5'-triphosphate = RNA(n+1) + diphosphate. DNA-dependent RNA polymerase (RNAP) catalyzes the transcription of DNA into RNA using the four ribonucleoside triphosphates as substrates. The chain is DNA-directed RNA polymerase subunit Rpo11 from Methanosarcina acetivorans (strain ATCC 35395 / DSM 2834 / JCM 12185 / C2A).